The chain runs to 422 residues: UDP-N-acetylglucosamine 1-carboxyvinyltransferase (422 aa).

Residue 22–23 (KN) participates in phosphoenolpyruvate binding. Residue Arg93 coordinates UDP-N-acetyl-alpha-D-glucosamine. The Proton donor role is filled by Cys117. Cys117 is subject to 2-(S-cysteinyl)pyruvic acid O-phosphothioketal. Residues 122 to 126 (RPVDQ), Asp309, and Ile331 each bind UDP-N-acetyl-alpha-D-glucosamine.

Belongs to the EPSP synthase family. MurA subfamily.

The protein resides in the cytoplasm. The enzyme catalyses phosphoenolpyruvate + UDP-N-acetyl-alpha-D-glucosamine = UDP-N-acetyl-3-O-(1-carboxyvinyl)-alpha-D-glucosamine + phosphate. It participates in cell wall biogenesis; peptidoglycan biosynthesis. Its function is as follows. Cell wall formation. Adds enolpyruvyl to UDP-N-acetylglucosamine. The sequence is that of UDP-N-acetylglucosamine 1-carboxyvinyltransferase from Delftia acidovorans (strain DSM 14801 / SPH-1).